The following is an 858-amino-acid chain: MDLPALLPAPTARGGQHGGGPGPLRRAPAPLGASPARRRLLLVRGPEDGGPGARPGEASGPSPPPAEDDSDGDSFLVLLEVPHGGAAAEAAGSQEAEPGSRVNLASRPEQGPSGPAAPPGPGVAPAGAVTISSQDLLVRLDRGVLALSAPPGPATAGAAAPRRAPQASGPSTPGYRCPEPQCALAFAKKHQLKVHLLTHGGGQGRRPFKCPLEGCGWAFTTSYKLKRHLQSHDKLRPFGCPVGGCGKKFTTVYNLKAHMKGHEQESLFKCEVCAERFPTHAKLSSHQRSHFEPERPYKCDFPGCEKTFITVSALFSHNRAHFREQELFSCSFPGCSKQYDKACRLKIHLRSHTGERPFICDSDSCGWTFTSMSKLLRHRRKHDDDRRFTCPVEGCGKSFTRAEHLKGHSITHLGTKPFECPVEGCCARFSARSSLYIHSKKHVQDVGAPKSRCPVSTCNRLFTSKHSMKAHMVRQHSRRQDLLPQLEAPSSLTPSSELSSPGQSELTNMDLAALFSDTPANASGSAGGSDEALNSGILTIDVTSVSSSLGGNLPANNSSLGPMEPLVLVAHSDIPPSLDSPLVLGTAATVLQQGSFSVDDVQTVSAGALGCLVALPMKNLSDDPLALTSNSNLAAHITTPTSSSTPRENASVPELLAPIKVEPDSPSRPGAVGQQEGSHGLPQSTLPSPAEQHGAQDTELSAGTGNFYLESGGSARTDYRAIQLAKEKKQRGAGSNAGASQSTQRKIKEGKMSPPHFHASQNSWLCGSLVVPSGGRPGPAPAAGVQCGAQGVQVQLVQDDPSGEGVLPSARGPATFLPFLTVDLPVYVLQEVLPSSGGPAGPEATQFPGSTINLQDLQ.

Disordered regions lie at residues 1 to 127 and 151 to 174; these read MDLP…APAG and PGPA…STPG. Composition is skewed to low complexity over residues 23–35, 84–97, and 151–171; these read PLRR…GASP, GGAA…QEAE, and PGPA…SGPS. Ser-34 carries the post-translational modification Phosphoserine. Residue Thr-172 is modified to Phosphothreonine. 10 consecutive C2H2-type zinc fingers follow at residues 175-199, 208-232, 238-262, 268-290, 297-321, 328-352, 358-382, 388-412, 418-442, and 451-476; these read YRCP…LLTH, FKCP…LQSH, FGCP…MKGH, FKCE…QRSH, YKCD…NRAH, FSCS…LRSH, FICD…RRKH, FTCP…SITH, FECP…SKKH, and SRCP…VRQH. Positions 579–688 are required for transcriptional activation; the sequence is DSPLVLGTAA…HGLPQSTLPS (110 aa). Residue Lys-660 forms a Glycyl lysine isopeptide (Lys-Gly) (interchain with G-Cter in SUMO) linkage. Disordered regions lie at residues 660–696, 726–756, and 837–858; these read KVEP…HGAQ, KEKK…SPPH, and GGPA…QDLQ. Ser-665 is modified (phosphoserine). Polar residues predominate over residues 675-687; the sequence is QEGSHGLPQSTLP. Positions 781–858 are interaction with CIITA; it reads PAAGVQCGAQ…GSTINLQDLQ (78 aa). The span at 847–858 shows a compositional bias: polar residues; it reads FPGSTINLQDLQ.

The protein belongs to the ZXD family. As to quaternary structure, self-associates. Interacts with ZXDA and CIITA. Sumoylated at Lys-660 with SUMO1, SUMO2 and SUMO3; sumoylation enhances the activity of the transcriptional activation domain. In terms of tissue distribution, expressed at high levels in heart, kidney, liver and testis, at moderate levels in brain and stomach, and at low levels in lung, muscle, placenta, small intestine and spleen.

It localises to the nucleus. Functionally, cooperates with CIITA to promote transcription of MHC class I and MHC class II genes. In Homo sapiens (Human), this protein is Zinc finger protein ZXDC (ZXDC).